The primary structure comprises 1368 residues: DNA-directed RNA polymerase subunit beta (1368 aa).

This sequence belongs to the RNA polymerase beta chain family. As to quaternary structure, the RNAP catalytic core consists of 2 alpha, 1 beta, 1 beta' and 1 omega subunit. When a sigma factor is associated with the core the holoenzyme is formed, which can initiate transcription.

It carries out the reaction RNA(n) + a ribonucleoside 5'-triphosphate = RNA(n+1) + diphosphate. Functionally, DNA-dependent RNA polymerase catalyzes the transcription of DNA into RNA using the four ribonucleoside triphosphates as substrates. The sequence is that of DNA-directed RNA polymerase subunit beta from Ralstonia pickettii (strain 12J).